We begin with the raw amino-acid sequence, 146 residues long: Transcriptional regulator MraZ (146 aa).

SpoVT-AbrB domains follow at residues 7–54 and 83–126; these read NATN…GLDL and GVFV…QPEA.

Belongs to the MraZ family. As to quaternary structure, forms oligomers.

The protein localises to the cytoplasm. It is found in the nucleoid. This is Transcriptional regulator MraZ from Rhizobium rhizogenes (strain K84 / ATCC BAA-868) (Agrobacterium radiobacter).